Here is a 569-residue protein sequence, read N- to C-terminus: Proline--tRNA ligase (569 aa).

It belongs to the class-II aminoacyl-tRNA synthetase family. ProS type 1 subfamily. As to quaternary structure, homodimer.

The protein localises to the cytoplasm. It carries out the reaction tRNA(Pro) + L-proline + ATP = L-prolyl-tRNA(Pro) + AMP + diphosphate. In terms of biological role, catalyzes the attachment of proline to tRNA(Pro) in a two-step reaction: proline is first activated by ATP to form Pro-AMP and then transferred to the acceptor end of tRNA(Pro). As ProRS can inadvertently accommodate and process non-cognate amino acids such as alanine and cysteine, to avoid such errors it has two additional distinct editing activities against alanine. One activity is designated as 'pretransfer' editing and involves the tRNA(Pro)-independent hydrolysis of activated Ala-AMP. The other activity is designated 'posttransfer' editing and involves deacylation of mischarged Ala-tRNA(Pro). The misacylated Cys-tRNA(Pro) is not edited by ProRS. The protein is Proline--tRNA ligase of Campylobacter hominis (strain ATCC BAA-381 / DSM 21671 / CCUG 45161 / LMG 19568 / NCTC 13146 / CH001A).